The sequence spans 252 residues: 2-succinyl-6-hydroxy-2,4-cyclohexadiene-1-carboxylate synthase (252 aa).

The protein belongs to the AB hydrolase superfamily. MenH family. As to quaternary structure, monomer.

It carries out the reaction 5-enolpyruvoyl-6-hydroxy-2-succinyl-cyclohex-3-ene-1-carboxylate = (1R,6R)-6-hydroxy-2-succinyl-cyclohexa-2,4-diene-1-carboxylate + pyruvate. It functions in the pathway quinol/quinone metabolism; 1,4-dihydroxy-2-naphthoate biosynthesis; 1,4-dihydroxy-2-naphthoate from chorismate: step 3/7. It participates in quinol/quinone metabolism; menaquinone biosynthesis. Functionally, catalyzes a proton abstraction reaction that results in 2,5-elimination of pyruvate from 2-succinyl-5-enolpyruvyl-6-hydroxy-3-cyclohexene-1-carboxylate (SEPHCHC) and the formation of 2-succinyl-6-hydroxy-2,4-cyclohexadiene-1-carboxylate (SHCHC). This is 2-succinyl-6-hydroxy-2,4-cyclohexadiene-1-carboxylate synthase from Salmonella choleraesuis (strain SC-B67).